The following is a 150-amino-acid chain: Transcription antitermination protein NusB (150 aa).

This sequence belongs to the NusB family.

Involved in transcription antitermination. Required for transcription of ribosomal RNA (rRNA) genes. Binds specifically to the boxA antiterminator sequence of the ribosomal RNA (rrn) operons. The polypeptide is Transcription antitermination protein NusB (Streptococcus pyogenes serotype M3 (strain ATCC BAA-595 / MGAS315)).